Here is a 576-residue protein sequence, read N- to C-terminus: Aspartate--tRNA ligase, cytoplasmic 1 (576 aa).

Positions 1–78 (MSETTPVPVG…NWGELPMNQS (78 aa)) are disordered. Basic and acidic residues predominate over residues 20–43 (LKKEQKKLEKEKKIAEAKAKKAAE). Residue Glu-302 coordinates L-aspartate. The tract at residues 324–327 (QLYK) is aspartate. Arg-346 is an L-aspartate binding site. Residues 346–348 (RAE), 354–356 (RHL), and Glu-499 each bind ATP. Residues Ser-502 and Arg-506 each contribute to the L-aspartate site. Residue 547-550 (GLER) coordinates ATP.

It belongs to the class-II aminoacyl-tRNA synthetase family. Type 2 subfamily.

Its subcellular location is the cytoplasm. The enzyme catalyses tRNA(Asp) + L-aspartate + ATP = L-aspartyl-tRNA(Asp) + AMP + diphosphate. This chain is Aspartate--tRNA ligase, cytoplasmic 1 (aspS1), found in Dictyostelium discoideum (Social amoeba).